A 314-amino-acid polypeptide reads, in one-letter code: uncharacterized protein (314 aa).

This sequence belongs to the carbohydrate kinase PfkB family.

This is an uncharacterized protein from Buchnera aphidicola subsp. Schizaphis graminum (strain Sg).